Here is a 240-residue protein sequence, read N- to C-terminus: Ribonuclease 3 (240 aa).

Residues 9-141 (VEELQKRLGV…LLAALYLDQG (133 aa)) enclose the RNase III domain. Glutamate 54 is a binding site for Mg(2+). Residue aspartate 58 is part of the active site. The Mg(2+) site is built by aspartate 127 and glutamate 130. Residue glutamate 130 is part of the active site. Residues 168-237 (DYKTALQEIV…ARKAYEKLVA (70 aa)) form the DRBM domain.

Belongs to the ribonuclease III family. In terms of assembly, homodimer. Mg(2+) serves as cofactor.

Its subcellular location is the cytoplasm. It carries out the reaction Endonucleolytic cleavage to 5'-phosphomonoester.. In terms of biological role, digests double-stranded RNA. Involved in the processing of primary rRNA transcript to yield the immediate precursors to the large and small rRNAs (23S and 16S). Processes some mRNAs, and tRNAs when they are encoded in the rRNA operon. Processes pre-crRNA and tracrRNA of type II CRISPR loci if present in the organism. The sequence is that of Ribonuclease 3 from Thermotoga neapolitana (strain ATCC 49049 / DSM 4359 / NBRC 107923 / NS-E).